Consider the following 391-residue polypeptide: Chaperone protein DnaJ (391 aa).

The J domain occupies 6-70 (DYYEILEVSR…EKRKLYDTYG (65 aa)). Residues 145–226 (GCIKNVKYTR…CKSRRMVDEV (82 aa)) form a CR-type zinc finger. Zn(2+)-binding residues include Cys158, Cys161, Cys174, Cys177, Cys200, Cys203, Cys214, and Cys217. 4 CXXCXGXG motif repeats span residues 158 to 165 (CPDCNGSG), 174 to 181 (CSDCNGEG), 200 to 207 (CPSCKGEG), and 214 to 221 (CKKCKSRR).

It belongs to the DnaJ family. As to quaternary structure, homodimer. Requires Zn(2+) as cofactor.

The protein localises to the cytoplasm. Its function is as follows. Participates actively in the response to hyperosmotic and heat shock by preventing the aggregation of stress-denatured proteins and by disaggregating proteins, also in an autonomous, DnaK-independent fashion. Unfolded proteins bind initially to DnaJ; upon interaction with the DnaJ-bound protein, DnaK hydrolyzes its bound ATP, resulting in the formation of a stable complex. GrpE releases ADP from DnaK; ATP binding to DnaK triggers the release of the substrate protein, thus completing the reaction cycle. Several rounds of ATP-dependent interactions between DnaJ, DnaK and GrpE are required for fully efficient folding. Also involved, together with DnaK and GrpE, in the DNA replication of plasmids through activation of initiation proteins. This is Chaperone protein DnaJ from Mycoplasmoides gallisepticum (strain R(low / passage 15 / clone 2)) (Mycoplasma gallisepticum).